Here is a 411-residue protein sequence, read N- to C-terminus: Tyrosine--tRNA ligase (411 aa).

Y34 is a binding site for L-tyrosine. Positions 39 to 48 (CTATSLHIGS) match the 'HIGH' region motif. Residues Y171 and Q175 each coordinate L-tyrosine. The 'KMSKS' region signature appears at 231-235 (KMGKT). Residue K234 coordinates ATP. The region spanning 345 to 411 (ITAFELFHEA…GKKRHILVKI (67 aa)) is the S4 RNA-binding domain.

Belongs to the class-I aminoacyl-tRNA synthetase family. TyrS type 1 subfamily. As to quaternary structure, homodimer.

It localises to the cytoplasm. The catalysed reaction is tRNA(Tyr) + L-tyrosine + ATP = L-tyrosyl-tRNA(Tyr) + AMP + diphosphate + H(+). Functionally, catalyzes the attachment of tyrosine to tRNA(Tyr) in a two-step reaction: tyrosine is first activated by ATP to form Tyr-AMP and then transferred to the acceptor end of tRNA(Tyr). In Rickettsia bellii (strain RML369-C), this protein is Tyrosine--tRNA ligase.